The following is a 374-amino-acid chain: Inner membrane transport permease YhhJ (374 aa).

The Cytoplasmic portion of the chain corresponds to 1–22 (MRHLRNIFNLGIKELRSLLGDK). The helical transmembrane segment at 23–43 (AMLTLIVFSFTVSVYSSATVT) threads the bilayer. Topologically, residues 44–172 (PGSLNLAPIA…TRMRFNPNLD (129 aa)) are periplasmic. An ABC transmembrane type-2 domain is found at 133 to 369 (NGYIQNIING…TIALLRFRKT (237 aa)). The chain crosses the membrane as a helical span at residues 173 to 193 (PAWFGGVMAIINNITMLAIVL). Residues 194–229 (TGSALIREREHGTVEHLLVMPITPFEIMMAKIWSMG) lie on the Cytoplasmic side of the membrane. The helical transmembrane segment at 230–250 (LVVLVVSGLSLVLMVKGVLGV) threads the bilayer. At 251–255 (PIEGS) the chain is on the periplasmic side. The helical transmembrane segment at 256–276 (IPLFMLGVALSLFATTSIGIF) threads the bilayer. Residues 277-283 (MGTIARS) lie on the Cytoplasmic side of the membrane. A helical transmembrane segment spans residues 284-304 (MPQLGLLVILVLLPLQMLSGG). The Periplasmic segment spans residues 305-342 (STPRESMPQMVQDIMLTMPTTHFVSLAQAILYRGAGFE). Residues 343–363 (IVWPQFLTLMAIGGAFFTIAL) form a helical membrane-spanning segment. Topologically, residues 364–374 (LRFRKTIGTMA) are cytoplasmic.

It belongs to the ABC-2 integral membrane protein family.

It is found in the cell inner membrane. The protein is Inner membrane transport permease YhhJ (yhhJ) of Escherichia coli (strain K12).